The chain runs to 469 residues: Signal recognition particle 54 kDa protein (469 aa).

Residues 104–111, 184–188, and 242–245 each bind GTP; these read GLYGSGKT, DTAGR, and TKLD. Disordered regions lie at residues 388-410 and 447-469; these read ELEN…SGKP and QQGG…PFGD. The segment covering 448 to 469 has biased composition (gly residues); the sequence is QGGGGGGGMGGMGGGGMGPFGD.

The protein belongs to the GTP-binding SRP family. SRP54 subfamily. Part of the signal recognition particle protein translocation system, which is composed of SRP and FtsY. Archaeal SRP consists of a 7S RNA molecule of 300 nucleotides and two protein subunits: SRP54 and SRP19.

It localises to the cytoplasm. It catalyses the reaction GTP + H2O = GDP + phosphate + H(+). Involved in targeting and insertion of nascent membrane proteins into the cytoplasmic membrane. Binds to the hydrophobic signal sequence of the ribosome-nascent chain (RNC) as it emerges from the ribosomes. The SRP-RNC complex is then targeted to the cytoplasmic membrane where it interacts with the SRP receptor FtsY. This chain is Signal recognition particle 54 kDa protein, found in Haloarcula marismortui (strain ATCC 43049 / DSM 3752 / JCM 8966 / VKM B-1809) (Halobacterium marismortui).